Here is a 415-residue protein sequence, read N- to C-terminus: Isocitrate dehydrogenase [NADP] 1 (415 aa).

T104 lines the NADP(+) pocket. S113, N115, R119, R129, and R153 together coordinate D-threo-isocitrate. D307 is a binding site for Mg(2+). Residues H339 to Y345, N352, Y390, and R394 contribute to the NADP(+) site.

It belongs to the isocitrate and isopropylmalate dehydrogenases family. In terms of assembly, homodimer. It depends on Mg(2+) as a cofactor. Requires Mn(2+) as cofactor.

The enzyme catalyses D-threo-isocitrate + NADP(+) = 2-oxoglutarate + CO2 + NADPH. Catalyzes the oxidative decarboxylation of isocitrate to 2-oxoglutarate and carbon dioxide with the concomitant reduction of NADP(+). This chain is Isocitrate dehydrogenase [NADP] 1, found in Colwellia maris.